We begin with the raw amino-acid sequence, 835 residues long: Transcription intermediary factor 1-beta (835 aa).

Residues 14–24 (AATAASAASGS) show a composition bias toward low complexity. The tract at residues 14–57 (AATAASAASGSPGSGEGSAGGEKRPAASSAAAASASASSPAGGG) is disordered. Phosphoserine is present on residues serine 24, serine 27, and serine 31. Residue lysine 36 forms a Glycyl lysine isopeptide (Lys-Gly) (interchain with G-Cter in SUMO2) linkage. Over residues 39-53 (AASSAAAASASASSP) the composition is skewed to low complexity. Serine 52 is modified (phosphoserine). The segment at 67-123 (CGVCRERLRPERDPRLLPCLHSACSACLGPATPAAANNSGDGGSAGDGAMVDCPVCK) adopts an RING-type zinc-finger fold. Lysine 129 participates in a covalent cross-link: Glycyl lysine isopeptide (Lys-Gly) (interchain with G-Cter in SUMO2). Serine 140 bears the Phosphoserine mark. The segment at 150–197 (DANQCCTSCEDNAPATSYCVECSEPLCETCVEAHQRVKYTKDHTVRST) adopts a B box-type 1; atypical zinc-finger fold. Zn(2+) is bound by residues cysteine 155, cysteine 158, cysteine 179, and histidine 183. A Glycyl lysine isopeptide (Lys-Gly) (interchain with G-Cter in SUMO2) cross-link involves residue lysine 201. Residues 206 to 247 (ERTVYCNVHKHEPLVLFCESCDTLTCRDCQLNAHKDHQYQFL) form a B box-type 2 zinc finger. Positions 211, 214, 234, and 239 each coordinate Zn(2+). The segment at 248 to 378 (EDAVRNQRKL…LIYFQLHRAL (131 aa)) is leucine zipper alpha helical coiled-coil region. Residues 249-378 (DAVRNQRKLL…LIYFQLHRAL (130 aa)) are interaction with MAGEC2. Residues lysine 256 and lysine 263 each participate in a glycyl lysine isopeptide (Lys-Gly) (interchain with G-Cter in SUMO2) cross-link. Position 268 is an N6-acetyllysine (lysine 268). Lysine 274 is covalently cross-linked (Glycyl lysine isopeptide (Lys-Gly) (interchain with G-Cter in SUMO2)). Lysine 306 is modified (N6-acetyllysine; alternate). Lysine 306 is covalently cross-linked (Glycyl lysine isopeptide (Lys-Gly) (interchain with G-Cter in SUMO2); alternate). Residue lysine 321 forms a Glycyl lysine isopeptide (Lys-Gly) (interchain with G-Cter in SUMO2) linkage. At lysine 342 the chain carries N6-acetyllysine. Residue lysine 368 forms a Glycyl lysine isopeptide (Lys-Gly) (interchain with G-Cter in SUMO2) linkage. Positions 368–372 (KLIYF) are involved in binding PPP1CA. N6-acetyllysine; alternate is present on lysine 379. A Glycyl lysine isopeptide (Lys-Gly) (interchain with G-Cter in SUMO2); alternate cross-link involves residue lysine 379. Lysine 379 is covalently cross-linked (Glycyl lysine isopeptide (Lys-Gly) (interchain with G-Cter in SUMO1); alternate). Lysine 409 is covalently cross-linked (Glycyl lysine isopeptide (Lys-Gly) (interchain with G-Cter in SUMO2)). The interval 413–481 (ERPGTNSTGP…SRSGEGEVSG (69 aa)) is disordered. Serine 419 is modified (phosphoserine). Lysine 436 is covalently cross-linked (Glycyl lysine isopeptide (Lys-Gly) (interchain with G-Cter in SUMO2)). Residues 436–445 (KQGSGSSQPM) are compositionally biased toward polar residues. 2 positions are modified to phosphoserine: serine 439 and serine 441. A Glycyl lysine isopeptide (Lys-Gly) (interchain with G-Cter in SUMO2); alternate cross-link involves residue lysine 470. Lysine 470 is covalently cross-linked (Glycyl lysine isopeptide (Lys-Gly) (interchain with G-Cter in SUMO1); alternate). A Citrulline modification is found at arginine 471. Serine 472 is subject to Phosphoserine. Position 473 is a citrulline (arginine 473). Phosphoserine is present on residues serine 474, serine 480, and serine 490. The segment at 477–514 (GEVSGLMRKVPRVSLERLDLDLTSDSQPPVFKVFPGST) is HP1 box. The PxVxL motif signature appears at 482 to 495 (LMRKVPRVSLERLD). Threonine 499 bears the Phosphothreonine mark. The residue at position 502 (serine 502) is a Phosphoserine. Residue lysine 508 forms a Glycyl lysine isopeptide (Lys-Gly) (interchain with G-Cter in SUMO2) linkage. A Glycyl lysine isopeptide (Lys-Gly) (interchain with G-Cter in SUMO2); alternate cross-link involves residue lysine 555. Lysine 555 is covalently cross-linked (Glycyl lysine isopeptide (Lys-Gly) (interchain with G-Cter in SUMO); alternate). A Glycyl lysine isopeptide (Lys-Gly) (interchain with G-Cter in SUMO2) cross-link involves residue lysine 576. At serine 595 the chain carries Phosphoserine. The segment at 626-673 (ATICRVCQKPGDLVMCNQCEFCFHLDCHLPSLQDVPGEEWSCSLCHVL) adopts a PHD-type zinc-finger fold. Residue lysine 677 forms a Glycyl lysine isopeptide (Lys-Gly) (interchain with G-Cter in SUMO) linkage. Phosphoserine occurs at positions 684, 690, and 698. Positions 696–800 (KLSPANQRKC…RFFETRMNDA (105 aa)) constitute a Bromo domain. A Glycyl lysine isopeptide (Lys-Gly) (interchain with G-Cter in SUMO2); alternate cross-link involves residue lysine 751. A Glycyl lysine isopeptide (Lys-Gly) (interchain with G-Cter in SUMO1); alternate cross-link involves residue lysine 751. Lysine 751 is covalently cross-linked (Glycyl lysine isopeptide (Lys-Gly) (interchain with G-Cter in SUMO); alternate). Phosphoserine is present on serine 753. Tyrosine 756 carries the phosphotyrosine modification. Serine 758 is subject to Phosphoserine. N6-acetyllysine; alternate occurs at positions 771, 775, and 780. Residues lysine 771, lysine 775, and lysine 780 each participate in a glycyl lysine isopeptide (Lys-Gly) (interchain with G-Cter in SUMO2); alternate cross-link. A Glycyl lysine isopeptide (Lys-Gly) (interchain with G-Cter in SUMO1); alternate cross-link involves residue lysine 780. Position 785 is a phosphoserine (serine 785). Lysine 805 is covalently cross-linked (Glycyl lysine isopeptide (Lys-Gly) (interchain with G-Cter in SUMO2)). The residue at position 825 (serine 825) is a Phosphoserine; by ATM and ATR and dsDNA kinase.

Belongs to the TRIM/RBCC family. Interacts with ZNF382. Interacts with SETX. Oligomer; the RBCC domain homotrimerizes and interacts with one molecule of KRAB to form the KRAB-KAP1 corepressor complex. Binding to a KRAB domain is an absolute requirement for silencing gene expression. Interacts with CEBPB and NR3C1. Interacts with a number of KRAB-ZFP proteins including ZNF10, ZFP53, ZFP68 and ZNF256. Interacts with NCOR1, NR3C1 and CHD3. Interacts with CEBPB (via the RING-type and PHD-type zinc fingers). Component of a ternary complex that includes TRIM28, a HP1 protein (CBX1, CBX3 OR CBX5), a KRAB domain-containing protein, and DNA. Interacts with CBX5 (via the PxVxL motif); the interaction occurs in interphase nuclei and competes for binding POGZ. Interacts with POGZ; the interaction competes for interaction with CBX5. Interacts with SETDB1; the interaction is enhanced by KAP1 sumoylation, stimulates SETDB1 histone methyltransferase activity and gene silencing. Interacts (via the PHD-type zinc finger) with UBE2I; the interaction is required for sumoylation and repressor activity. Component of the TRIM28/KAP1-ERBB4-MDM2 complex involved in connecting growth factor and DNA damage responses. Interacts directly with ERBB4; the interaction represses ERBB4-mediated transcription activity. Interacts with MDM2; the interaction contributes to p53/TP53 inactivation. Component of the TRIM28/KAP1-MDM2-p53/TP53; involved in regulating p53/TP53 stabilization and activity. Interacts (via the leucine zipper alpha helical coiled-coil) with E2F1 (central region); the interaction inhibits E2F1 acetylation and transcriptional activity. Interacts with PPP1CA; the interaction dephosphorylates TRIM28 at Ser-824 and forms a complex at the p21 promoter site. Interacts with PPP1CB; the interaction is weak but is increased on dephosphorylation at Ser-824. Interacts with SMARCAD1. Interacts with, and sumoylates IRF7. Interacts with MAGEC2. Part of a complex composed of TRIM28, HDAC1, HDAC2 and EHMT2. Interacts with AICDA. The large PER complex involved in the histone methylation is composed of at least PER2, CBX3, TRIM28, SUV39H1 and/or SUV39H2; CBX3 mediates the formation of the complex. Interacts with NR4A3; the interactions potentiates NR4A3 activity on NurRE promoter. Interacts (unphosphorylated or phosphorylated form) with ZBTB1 (via BTB domain). Probably part of a corepressor complex containing ZNF304, TRIM28, SETDB1 and DNMT1. Interacts with ATRX. Forms a complex with ATRX, SETDB1 and ZNF274. Interacts with ZFP568; the interaction mediates ZFP568 transcriptional repression activity. Interacts with RRP1B. Interacts with CRY1. Interacts with ZNF263; recruited to the SIX3 promoter along with other proteins involved in chromatin modification and transcriptional corepression where it contributes to transcriptional repression. Interacts with CYREN (via XLF motif). Interacts with TRIM17; this interaction prevents TRIM28 activity. Interacts with ZNF746. Interacts with PHF13. Interacts with ZNF354C. Interacts with ZNF432; the interaction is independent of PARP1. In terms of processing, ATM-induced phosphorylation on Ser-825 represses sumoylation leading to the de-repression of expression of a subset of genes involved in cell cycle control and apoptosis in response to genotoxic stress. Dephosphorylation by the phosphatases, PPP1CA and PP1CB forms, allows sumoylation and expression of TRIM28 target genes. Post-translationally, sumoylation/desumoylation events regulate TRIM28-mediated transcriptional repression. Sumoylation is required for interaction with CHD3 and SETDB1 and the corepressor activity. Represses and is repressed by Ser-824 phosphorylation. Enhances the TRIM28 corepressor activity, inhibiting transcriptional activity of a number of genes including GADD45A and CDKN1A/p21. Lys-555, Lys-780 and Lys-805 are the major sites of sumoylation. In response to Dox-induced DNA damage, enhanced phosphorylation on Ser-825 prevents sumoylation and allows de-repression of CDKN1A/p21. Auto-ubiquitinated; enhanced by MAGEA2 and MAGEC2. In terms of processing, citrullinated by PADI4. Post-translationally, ADP-ribosylated by SIRT6, promoting TRIM28/KAP1 interaction with CBX5, thereby contributing to the packaging of LINE-1 retrotransposon elements into transcriptionally repressive heterochromatin.

The protein resides in the nucleus. It carries out the reaction S-ubiquitinyl-[E2 ubiquitin-conjugating enzyme]-L-cysteine + [acceptor protein]-L-lysine = [E2 ubiquitin-conjugating enzyme]-L-cysteine + N(6)-ubiquitinyl-[acceptor protein]-L-lysine.. Its pathway is protein modification; protein sumoylation. Its function is as follows. Nuclear corepressor for KRAB domain-containing zinc finger proteins (KRAB-ZFPs). Mediates gene silencing by recruiting CHD3, a subunit of the nucleosome remodeling and deacetylation (NuRD) complex, and SETDB1 (which specifically methylates histone H3 at 'Lys-9' (H3K9me)) to the promoter regions of KRAB target genes. Enhances transcriptional repression by coordinating the increase in H3K9me, the decrease in histone H3 'Lys-9 and 'Lys-14' acetylation (H3K9ac and H3K14ac, respectively) and the disposition of HP1 proteins to silence gene expression. Recruitment of SETDB1 induces heterochromatinization. May play a role as a coactivator for CEBPB and NR3C1 in the transcriptional activation of ORM1. Also a corepressor for ERBB4. Inhibits E2F1 activity by stimulating E2F1-HDAC1 complex formation and inhibiting E2F1 acetylation. May serve as a partial backup to prevent E2F1-mediated apoptosis in the absence of RB1. Important regulator of CDKN1A/p21(CIP1). Has E3 SUMO-protein ligase activity toward itself via its PHD-type zinc finger. Also specifically sumoylates IRF7, thereby inhibiting its transactivation activity. Ubiquitinates p53/TP53 leading to its proteasomal degradation; the function is enhanced by MAGEC2 and MAGEA2, and possibly MAGEA3 and MAGEA6. Mediates the nuclear localization of KOX1, ZNF268 and ZNF300 transcription factors. In association with isoform 2 of ZFP90, is required for the transcriptional repressor activity of FOXP3 and the suppressive function of regulatory T-cells (Treg). Probably forms a corepressor complex required for activated KRAS-mediated promoter hypermethylation and transcriptional silencing of tumor suppressor genes (TSGs) or other tumor-related genes in colorectal cancer (CRC) cells. Required to maintain a transcriptionally repressive state of genes in undifferentiated embryonic stem cells (ESCs). In ESCs, in collaboration with SETDB1, is also required for H3K9me3 and silencing of endogenous and introduced retroviruses in a DNA-methylation independent-pathway. Associates at promoter regions of tumor suppressor genes (TSGs) leading to their gene silencing. The SETDB1-TRIM28-ZNF274 complex may play a role in recruiting ATRX to the 3'-exons of zinc finger genes with atypical chromatin signatures to establish or maintain/protect H3K9me3 at these transcriptionally active regions. The chain is Transcription intermediary factor 1-beta from Rattus norvegicus (Rat).